Reading from the N-terminus, the 484-residue chain is Probable protein disulfide-isomerase ER-60 (484 aa).

An N-terminal signal peptide occupies residues 1-14; that stretch reads MRWLLSCLFLVAFA. Thioredoxin domains lie at 15–125 and 338–467; these read SCSK…SRAG and FEDG…REAT. Catalysis depends on nucleophile residues C46, C49, C388, and C391. Intrachain disulfides connect C46–C49 and C388–C391. The Prevents secretion from ER signature appears at 481–484; it reads KSEL.

It belongs to the protein disulfide isomerase family.

Its subcellular location is the endoplasmic reticulum lumen. The catalysed reaction is Catalyzes the rearrangement of -S-S- bonds in proteins.. The chain is Probable protein disulfide-isomerase ER-60 from Schistosoma mansoni (Blood fluke).